The chain runs to 396 residues: Tryptophan synthase beta chain (396 aa).

The residue at position 86 (Lys86) is an N6-(pyridoxal phosphate)lysine.

Belongs to the TrpB family. As to quaternary structure, tetramer of two alpha and two beta chains. It depends on pyridoxal 5'-phosphate as a cofactor.

The catalysed reaction is (1S,2R)-1-C-(indol-3-yl)glycerol 3-phosphate + L-serine = D-glyceraldehyde 3-phosphate + L-tryptophan + H2O. Its pathway is amino-acid biosynthesis; L-tryptophan biosynthesis; L-tryptophan from chorismate: step 5/5. The beta subunit is responsible for the synthesis of L-tryptophan from indole and L-serine. The polypeptide is Tryptophan synthase beta chain (Serratia proteamaculans (strain 568)).